A 477-amino-acid polypeptide reads, in one-letter code: RTX-I toxin determinant D (477 aa).

Residues 1-59 lie on the Cytoplasmic side of the membrane; the sequence is MKTWLMGLYEFFQAYKTVWTEIWKIRHQLDTPDREKDENEFLPAHLELIETPVSKKPRL. Residues 60–80 form a helical membrane-spanning segment; the sequence is IAYLIMLFLFLALVISIVSHV. The Periplasmic portion of the chain corresponds to 81 to 477; the sequence is EIVATATGKL…ESVSESLRER (397 aa).

It belongs to the membrane fusion protein (MFP) (TC 8.A.1) family.

The protein localises to the cell inner membrane. In terms of biological role, involved in the transport of the toxin RTX-I as well as that of RTX-II. The chain is RTX-I toxin determinant D (apxID) from Actinobacillus pleuropneumoniae (Haemophilus pleuropneumoniae).